We begin with the raw amino-acid sequence, 225 residues long: UPF0758 protein XAC3915 (225 aa).

The region spanning 102–224 (ALSDPPSVGR…PVSFAERGWL (123 aa)) is the MPN domain. Zn(2+) is bound by residues H173, H175, and D186. A JAMM motif motif is present at residues 173 to 186 (HNHPSGNPEPSEAD).

Belongs to the UPF0758 family.

This Xanthomonas axonopodis pv. citri (strain 306) protein is UPF0758 protein XAC3915.